Consider the following 932-residue polypeptide: Beta-mannosidase A (932 aa).

An N-terminal signal peptide occupies residues 1–19 (MRVPAQATIAVLASAVSSP). N-linked (GlcNAc...) asparagine glycans are attached at residues N41, N81, N94, N249, N261, N284, N289, N318, and N348. E480 serves as the catalytic Proton donor. N-linked (GlcNAc...) asparagine glycans are attached at residues N538, N551, N609, N624, N632, N659, N739, and N791.

It belongs to the glycosyl hydrolase 2 family. Beta-mannosidase A subfamily. In terms of assembly, homodimer.

It localises to the secreted. The enzyme catalyses Hydrolysis of terminal, non-reducing beta-D-mannose residues in beta-D-mannosides.. The protein operates within glycan metabolism; N-glycan degradation. Functionally, exoglycosidase that cleaves the single beta-linked mannose residue from the non-reducing end of beta-mannosidic oligosaccharides of various complexity and length. Involved in the degradation of polymeric mannan and galactomannan. The sequence is that of Beta-mannosidase A (mndA) from Aspergillus terreus (strain NIH 2624 / FGSC A1156).